The sequence spans 316 residues: Methionyl-tRNA formyltransferase (316 aa).

Residue 112-115 participates in (6S)-5,6,7,8-tetrahydrofolate binding; it reads SLLP.

This sequence belongs to the Fmt family.

The enzyme catalyses L-methionyl-tRNA(fMet) + (6R)-10-formyltetrahydrofolate = N-formyl-L-methionyl-tRNA(fMet) + (6S)-5,6,7,8-tetrahydrofolate + H(+). Attaches a formyl group to the free amino group of methionyl-tRNA(fMet). The formyl group appears to play a dual role in the initiator identity of N-formylmethionyl-tRNA by promoting its recognition by IF2 and preventing the misappropriation of this tRNA by the elongation apparatus. The polypeptide is Methionyl-tRNA formyltransferase (Trichlorobacter lovleyi (strain ATCC BAA-1151 / DSM 17278 / SZ) (Geobacter lovleyi)).